Here is a 605-residue protein sequence, read N- to C-terminus: Aspartate--tRNA(Asp/Asn) ligase (605 aa).

L-aspartate is bound at residue E172. Residues 196–199 (QLFK) are aspartate. Position 218 (R218) interacts with L-aspartate. ATP contacts are provided by residues 218–220 (RDE) and Q227. Residue H455 coordinates L-aspartate. ATP is bound at residue E489. Residue R496 coordinates L-aspartate. 541-544 (GLDR) contributes to the ATP binding site.

This sequence belongs to the class-II aminoacyl-tRNA synthetase family. Type 1 subfamily. As to quaternary structure, homodimer.

It is found in the cytoplasm. The catalysed reaction is tRNA(Asx) + L-aspartate + ATP = L-aspartyl-tRNA(Asx) + AMP + diphosphate. In terms of biological role, aspartyl-tRNA synthetase with relaxed tRNA specificity since it is able to aspartylate not only its cognate tRNA(Asp) but also tRNA(Asn). Reaction proceeds in two steps: L-aspartate is first activated by ATP to form Asp-AMP and then transferred to the acceptor end of tRNA(Asp/Asn). In Ralstonia nicotianae (strain ATCC BAA-1114 / GMI1000) (Ralstonia solanacearum), this protein is Aspartate--tRNA(Asp/Asn) ligase.